The sequence spans 383 residues: ATP phosphoribosyltransferase regulatory subunit (383 aa).

This sequence belongs to the class-II aminoacyl-tRNA synthetase family. HisZ subfamily. As to quaternary structure, heteromultimer composed of HisG and HisZ subunits.

Its subcellular location is the cytoplasm. It functions in the pathway amino-acid biosynthesis; L-histidine biosynthesis; L-histidine from 5-phospho-alpha-D-ribose 1-diphosphate: step 1/9. Required for the first step of histidine biosynthesis. May allow the feedback regulation of ATP phosphoribosyltransferase activity by histidine. This is ATP phosphoribosyltransferase regulatory subunit from Paraburkholderia xenovorans (strain LB400).